The following is an 860-amino-acid chain: DNA mismatch repair protein MutS (860 aa).

Gly618–Ser625 contributes to the ATP binding site.

It belongs to the DNA mismatch repair MutS family.

In terms of biological role, this protein is involved in the repair of mismatches in DNA. It is possible that it carries out the mismatch recognition step. This protein has a weak ATPase activity. The sequence is that of DNA mismatch repair protein MutS from Shewanella piezotolerans (strain WP3 / JCM 13877).